Here is a 353-residue protein sequence, read N- to C-terminus: UPF0283 membrane protein YcjF (353 aa).

The span at 1–19 (MSEPLKPRIDFAEPLKEEP) shows a compositional bias: basic and acidic residues. Residues 1-35 (MSEPLKPRIDFAEPLKEEPTSAFKAQQTFSEAESR) form a disordered region. 3 consecutive transmembrane segments (helical) span residues 70–90 (MVMG…IQWT), 100–120 (VALG…GSVV), and 213–233 (ESTL…FIAW).

This sequence belongs to the UPF0283 family.

The protein resides in the cell inner membrane. The sequence is that of UPF0283 membrane protein YcjF from Salmonella agona (strain SL483).